We begin with the raw amino-acid sequence, 84 residues long: UPF0291 protein SMU_447 (84 aa).

The segment at 57–84 (EGNDITPAKLKEIQRQKGIHGRKPEDNS) is disordered.

Belongs to the UPF0291 family.

The protein localises to the cytoplasm. The protein is UPF0291 protein SMU_447 of Streptococcus mutans serotype c (strain ATCC 700610 / UA159).